The sequence spans 92 residues: Small ribosomal subunit protein uS19c (92 aa).

This sequence belongs to the universal ribosomal protein uS19 family.

The protein resides in the plastid. It is found in the chloroplast. Functionally, protein S19 forms a complex with S13 that binds strongly to the 16S ribosomal RNA. This Pinus thunbergii (Japanese black pine) protein is Small ribosomal subunit protein uS19c (rps19).